We begin with the raw amino-acid sequence, 396 residues long: NADH-quinone oxidoreductase subunit D (396 aa).

The protein belongs to the complex I 49 kDa subunit family. NDH-1 is composed of 14 different subunits. Subunits NuoB, C, D, E, F, and G constitute the peripheral sector of the complex.

The protein localises to the cell inner membrane. It catalyses the reaction a quinone + NADH + 5 H(+)(in) = a quinol + NAD(+) + 4 H(+)(out). In terms of biological role, NDH-1 shuttles electrons from NADH, via FMN and iron-sulfur (Fe-S) centers, to quinones in the respiratory chain. The immediate electron acceptor for the enzyme in this species is believed to be ubiquinone. Couples the redox reaction to proton translocation (for every two electrons transferred, four hydrogen ions are translocated across the cytoplasmic membrane), and thus conserves the redox energy in a proton gradient. The chain is NADH-quinone oxidoreductase subunit D from Mesorhizobium japonicum (strain LMG 29417 / CECT 9101 / MAFF 303099) (Mesorhizobium loti (strain MAFF 303099)).